Consider the following 274-residue polypeptide: MNKQSLFENIKRKKSFLCVGLDTDIKKIPDHLLDDSDPIFAFNKAIVDATADYCIAYKPNLAFYESMGVKGWIAFEKTVNYIKENYPDQFIIADAKRGDIGNTSAMYARTFFEELDIDSVTVAPYMGEDSVTPFLSYEGKWVILLALTSNKGSHDFQLTEDANGERLFEKVLKKSQEWANDEQMMYVVGATQGRAFEDIRKIVPNHFLLVPGIGAQGGSLEEVCKYGMNSTCGLIVNSSRGIIYVDKTENFAAAARAAAKEVQEQMAEQLKAIL.

Catalysis depends on Lys-96, which acts as the Proton donor.

It belongs to the OMP decarboxylase family. Type 2 subfamily.

The enzyme catalyses orotidine 5'-phosphate + H(+) = UMP + CO2. Its pathway is pyrimidine metabolism; UMP biosynthesis via de novo pathway; UMP from orotate: step 2/2. The chain is Orotidine 5'-phosphate decarboxylase from Bacteroides fragilis (strain YCH46).